Reading from the N-terminus, the 494-residue chain is MSNYFDTLNLREQLDQLGRCRFMDREEFSTEADYLKGKRVVIVGCGAQGLNQGLNMRDSGLNVAYALRQAAIDEQRQSFKNASENGFEVASYEKLIPQADLVINLTPDKQHTNVVETVMPLMKEGATLGYSHGFNIVEEGMKIRKDLTVVMVAPKCPGTEVREEYKRGFGVPTLIAVHPENDPKGEGWDIAKAWAAGTGGHRAGCLESSFVAEVKSDLMGEQTILCGMLQAGSIVCYEKMIADGIDASYAGKLLQFGWETVTEALKFGGVTHMMDRLSNPAKIKAFDLSEELKDLMRPLYNKHMDDIISGHFSSTMMADWANDDVNLLGWREETGETAFENYPDSSLEIPEQEYFDNGILMVAMVRAGVELAFEAMTASGIVDESAYYESLHELPLIANTVARKRLYEMNVVISDTAEYGNYLFANVATPLLREKFMPLVDTDVIGRGLGAISNQVDNAKLIEVNETIRNHPVEYIGEELRGYMTDMKTIAVGG.

One can recognise a KARI N-terminal Rossmann domain in the interval 14 to 208 (LDQLGRCRFM…GGHRAGCLES (195 aa)). NADP(+) contacts are provided by residues 45–48 (CGAQ), arginine 68, arginine 76, serine 78, and 108–110 (DKQ). The active site involves histidine 132. NADP(+) is bound at residue glycine 158. KARI C-terminal knotted domains follow at residues 209–344 (SFVA…NYPD) and 345–487 (SSLE…MTDM). Mg(2+) is bound by residues aspartate 217, glutamate 221, glutamate 389, and glutamate 393. A substrate-binding site is contributed by serine 414.

Belongs to the ketol-acid reductoisomerase family. It depends on Mg(2+) as a cofactor.

It carries out the reaction (2R)-2,3-dihydroxy-3-methylbutanoate + NADP(+) = (2S)-2-acetolactate + NADPH + H(+). It catalyses the reaction (2R,3R)-2,3-dihydroxy-3-methylpentanoate + NADP(+) = (S)-2-ethyl-2-hydroxy-3-oxobutanoate + NADPH + H(+). The protein operates within amino-acid biosynthesis; L-isoleucine biosynthesis; L-isoleucine from 2-oxobutanoate: step 2/4. It participates in amino-acid biosynthesis; L-valine biosynthesis; L-valine from pyruvate: step 2/4. Involved in the biosynthesis of branched-chain amino acids (BCAA). Catalyzes an alkyl-migration followed by a ketol-acid reduction of (S)-2-acetolactate (S2AL) to yield (R)-2,3-dihydroxy-isovalerate. In the isomerase reaction, S2AL is rearranged via a Mg-dependent methyl migration to produce 3-hydroxy-3-methyl-2-ketobutyrate (HMKB). In the reductase reaction, this 2-ketoacid undergoes a metal-dependent reduction by NADPH to yield (R)-2,3-dihydroxy-isovalerate. This is Ketol-acid reductoisomerase (NADP(+)) from Aliivibrio salmonicida (strain LFI1238) (Vibrio salmonicida (strain LFI1238)).